The following is a 563-amino-acid chain: uncharacterized protein (563 aa).

The Cytoplasmic portion of the chain corresponds to 1-13 (MASRSCICQVSAG). A helical transmembrane segment spans residues 14-34 (IIFLIGAALLVAGLVIVLNVF). Residues 35–528 (PNIVNNQIND…LFTPVSTVNT (494 aa)) are Lumenal-facing. N-linked (GlcNAc...) asparagine glycans are attached at residues N43, N112, N133, N188, N265, N295, N315, and N502. A helical transmembrane segment spans residues 529 to 549 (ICWIAVGLGAGLIALSIVMVI). The Cytoplasmic segment spans residues 550–563 (VSFCCFRDEHHKTS).

Belongs to the CD36 family.

The protein resides in the membrane. This is an uncharacterized protein from Caenorhabditis elegans.